The sequence spans 83 residues: Erabutoxin c (83 aa).

An N-terminal signal peptide occupies residues 1-21 (MKTLLLTLVVVTIVCLDLGYT). The interval 24–38 (CFNHQSSQPQTTKTC) is loop I. 4 disulfides stabilise this stretch: cysteine 24–cysteine 45, cysteine 38–cysteine 62, cysteine 64–cysteine 75, and cysteine 76–cysteine 81. A stretch between loop I and loop II region spans residues 39–44 (SPGESS). The loop II stretch occupies residues 45–62 (CYHKQWSDFRGTIIERGC). The tract at residues 64–75 (CPTVKPGINLSC) is loop III.

The protein belongs to the three-finger toxin family. Short-chain subfamily. Type I alpha-neurotoxin sub-subfamily. In terms of tissue distribution, expressed by the venom gland.

It is found in the secreted. In terms of biological role, binds to muscle nicotinic acetylcholine receptor (nAChR) and inhibit acetylcholine from binding to the receptor, thereby impairing neuromuscular transmission. Binds to Torpedo marmorata nAChR (Kd=0.14 nM). In Laticauda semifasciata (Black-banded sea krait), this protein is Erabutoxin c.